Consider the following 246-residue polypeptide: UDP-N-acetyl-D-mannosaminuronic acid transferase (246 aa).

Belongs to the glycosyltransferase 26 family.

The enzyme catalyses UDP-N-acetyl-alpha-D-mannosaminouronate + N-acetyl-alpha-D-glucosaminyl-di-trans,octa-cis-undecaprenyl diphosphate = beta-D-ManNAcA-(1-&gt;4)-alpha-D-GlcNAc-di-trans,octa-cis-undecaprenyl diphosphate + UDP + H(+). The protein operates within bacterial outer membrane biogenesis; enterobacterial common antigen biosynthesis. In terms of biological role, catalyzes the synthesis of Und-PP-GlcNAc-ManNAcA (Lipid II), the second lipid-linked intermediate involved in enterobacterial common antigen (ECA) synthesis. The polypeptide is UDP-N-acetyl-D-mannosaminuronic acid transferase (Serratia proteamaculans (strain 568)).